The sequence spans 371 residues: O-antigen chain mannosyltransferase C (371 aa).

It belongs to the glycosyltransferase group 1 family. Glycosyltransferase 4 subfamily.

The catalysed reaction is N-acetyl-alpha-D-glucosaminyl-di-trans,octa-cis-undecaprenyl diphosphate + GDP-alpha-D-mannose = alpha-D-mannosyl-(1-&gt;3)-N-acetyl-alpha-D-glucosaminyl-di-trans,octa-cis-undecaprenyl diphosphate + GDP + H(+). It participates in bacterial outer membrane biogenesis; LPS O-antigen biosynthesis. Its function is as follows. Mannosyltransferase involved in the biosynthesis of the repeat unit of the lipopolysaccharide (LPS) O-antigen region. Catalyzes the transfer of a single alpha-(1-&gt;3)-linked mannose residue to the acceptor N-acetyl-glucosaminyl-diphospho-undecaprenol during the synthesis of the adapter region. The sequence is that of O-antigen chain mannosyltransferase C from Escherichia coli.